A 47-amino-acid polypeptide reads, in one-letter code: Large ribosomal subunit protein bL32c (47 aa).

Belongs to the bacterial ribosomal protein bL32 family.

The protein resides in the plastid. This chain is Large ribosomal subunit protein bL32c (rpl32), found in Prototheca wickerhamii.